A 594-amino-acid chain; its full sequence is CRISPR-associated DNA-binding protein Cas12m (594 aa).

Residues 1 to 85 (MSRLEARTRY…EKVRQVMVFE (85 aa)) form a recognition domain (REC1-N) region. The interval 86 to 153 (SETTKKIKEL…ERSFIFEARK (68 aa)) is recognition domain (REC2). The interval 154-211 (QELAQLEKERWAVVKELGKGSGLYWCNLEDVVNSYDIGRKKAKAAGGEMRFHRWDGTG) is recognition domain (REC1-C). The segment at 212–314 (KVTVRFQKGL…RYKLNLVLEI (103 aa)) is wedge domain (WED). Residues 315–329 (LGENTNRILPALEGT) form a linker region. The tract at residues 330-540 (AAIDLGWRTV…KNHVEFTYVP (211 aa)) is ruvC-I. Positions 541–575 (AENTTITCHKCGHKEKFDAAAQIIHTCSTCGELWD) are target nucleic-acid binding (TNB). The Zn(2+) site is built by Cys548, Cys551, Cys567, and Cys570. The ruvC-II stretch occupies residues 576-594 (QDYNAAKNLLAFSQKGGVK). Asp577 contacts Mg(2+).

It belongs to the CRISPR-associated DNA-binding protein Cas12m family. Mg(2+) serves as cofactor. Zn(2+) is required as a cofactor.

Its function is as follows. CRISPR (clustered regularly interspaced short palindromic repeat), is an adaptive immune system that provides protection against mobile genetic elements (viruses, transposable elements and conjugative plasmids). CRISPR clusters contain sequences complementary to antecedent mobile elements and target invading nucleic acids. CRISPR clusters are transcribed and processed into CRISPR RNA (crRNA). Recognizes a short motif in the CRISPR repeat sequences (the 5' PAM or protospacer adjacent motif, 5'-C/TCN-3' in this organism) to help distinguish self versus nonself, as targets within the bacterial CRISPR locus do not have PAMs. Upon expression in E.coli as a CRISPR locus inhibits plasmid propagation when targeted to regions essential for plasmid propagation (replication origin but not a selectable marker), probably by inhibiting transcription. Cas12m-crRNA binds DNA in a PAM-dependent, crRNA-guided fashion. Upon expression in E.coli as a CRISPR region preferentially binds to its associated crRNA. Probably required for pre-crRNA processing to mature crRNA. The polypeptide is CRISPR-associated DNA-binding protein Cas12m (Thermanaerosceptrum fracticalcis).